The sequence spans 447 residues: Tubulin beta-1 chain (447 aa).

Residues glutamine 11, glutamate 69, serine 138, glycine 142, threonine 143, glycine 144, asparagine 204, and asparagine 226 each coordinate GTP. Glutamate 69 contributes to the Mg(2+) binding site. Residues 424–447 (QYQDATAEEEGEGDEEEAEGEAAA) form a disordered region. The segment covering 429–447 (TAEEEGEGDEEEAEGEAAA) has biased composition (acidic residues).

This sequence belongs to the tubulin family. Dimer of alpha and beta chains. A typical microtubule is a hollow water-filled tube with an outer diameter of 25 nm and an inner diameter of 15 nM. Alpha-beta heterodimers associate head-to-tail to form protofilaments running lengthwise along the microtubule wall with the beta-tubulin subunit facing the microtubule plus end conferring a structural polarity. Microtubules usually have 13 protofilaments but different protofilament numbers can be found in some organisms and specialized cells. The cofactor is Mg(2+).

The protein resides in the cytoplasm. Its subcellular location is the cytoskeleton. Tubulin is the major constituent of microtubules, a cylinder consisting of laterally associated linear protofilaments composed of alpha- and beta-tubulin heterodimers. Microtubules grow by the addition of GTP-tubulin dimers to the microtubule end, where a stabilizing cap forms. Below the cap, tubulin dimers are in GDP-bound state, owing to GTPase activity of alpha-tubulin. The chain is Tubulin beta-1 chain (TUBB1) from Cyanophora paradoxa.